Here is a 523-residue protein sequence, read N- to C-terminus: WD repeat-containing protein YPL247C (523 aa).

Residues 1–64 form a disordered region; it reads MDPFHNGNKR…TTNGGNSKRN (64 aa). Polar residues predominate over residues 9–40; that stretch reads KRSSISFGSSQRQPYNKNNYLSGTNGPSSAAQ. At serine 47 the chain carries Phosphoserine. Positions 52-64 are enriched in low complexity; it reads SGNTTNGGNSKRN. The residue at position 65 (serine 65) is a Phosphoserine. WD repeat units follow at residues 173–213, 241–281, 285–325, and 392–432; these read DVVY…RQFQ, GTFP…YVKT, AHDS…HSTI, and GHGS…MEIN. The interval 436-472 is disordered; sequence SKSPSIHGTSLEDPDGDTEMTDGGAGSGLNEDPLSLN.

Belongs to the WD repeat WDR68 family.

The protein localises to the cytoplasm. The protein resides in the nucleus. The protein is WD repeat-containing protein YPL247C of Saccharomyces cerevisiae (strain ATCC 204508 / S288c) (Baker's yeast).